The sequence spans 148 residues: Receptor activity-modifying protein 1 (148 aa).

A signal peptide spans 1 to 26; that stretch reads MVRVLRGLPWRGLWLLLAHQLFLVTA. Cystine bridges form between C27–C82, C40–C72, and C57–C104. At 27–118 the chain is on the extracellular side; sequence CQDAHYGTLM…RALGDPPSTI (92 aa). Residues 119–140 form a helical membrane-spanning segment; that stretch reads LCPFVVLPITVTLLVTALVVWR. Over 141-148 the chain is Cytoplasmic; the sequence is SKRAESIV.

This sequence belongs to the RAMP family. Heterodimer of CALCRL and RAMP1; the interaction induces allosteric modulation of CALCRL function and CGRP1/CALCA and CGRP2/CALCB ligand specificity. Heterodimer of CALCR and RAMP1; interaction forms the AMYR1 receptor complex for amylin/IAPP and CGRP1/CALCA ligands.

Its subcellular location is the cell membrane. Its function is as follows. Accessory protein that interacts with and modulates the function of G-protein coupled receptors including calcitonin gene-related peptide type 1 receptor (CALCRL) and calcitonin receptor (CALCR). Required for the transport of CALCRL to the plasma membrane. Together with CALCRL, form the receptor complex for the calcitonin gene-related peptides CGRP1/CALCA and CGRP2/CALCB. Together with CALCR, form the AMYR1 receptor complex for amylin/IAPP and CGRP1/CALCA. In Cavia porcellus (Guinea pig), this protein is Receptor activity-modifying protein 1 (RAMP1).